Here is a 144-residue protein sequence, read N- to C-terminus: Hemoglobin embryonic subunit alpha (144 aa).

The Globin domain maps to 3 to 144; the sequence is SLSAKDKDVV…LALALAEKYR (142 aa). Residue His61 coordinates O2. Position 90 (His90) interacts with heme b.

The protein belongs to the globin family. As to quaternary structure, heterotetramer of two alpha chains and two beta chains. As to expression, red blood cells.

Its function is as follows. Involved in oxygen transport from gills to the various peripheral tissues. The sequence is that of Hemoglobin embryonic subunit alpha from Oryzias latipes (Japanese rice fish).